The primary structure comprises 1218 residues: DNA polymerase subunit gamma-1 (1218 aa).

The interval 31 to 50 is disordered; that stretch reads LDPVPSDGRPPSQMPSSENG. The Exo I signature appears at 179–183; sequence VFDVE. The active-site Exonuclease activity is the Asp181. The Exo II signature appears at 250 to 258; sequence VGHNVSFDR. Ser289 contacts DNA. The short motif at 378–386 is the Exo III element; the sequence is YCARDVWAT. Residues 484–524 are disordered; that stretch reads KKVKKPASASKLPIEGAGPFGDPMDQEDPGPPSEEEELQRS. Residues 492–553 form an accessory-interacting determinant region; that stretch reads ASKLPIEGAG…RPQHLPGHPG (62 aa). The segment covering 507–520 has biased composition (acidic residues); that stretch reads MDQEDPGPPSEEEE. Arg561 contributes to the RNA binding site. Ser575 is a DNA binding site. Positions 733, 742, and 747 each coordinate RNA. Residues Lys785 and Thr828 each coordinate DNA. A trigger loop region spans residues 837–843; the sequence is TWLTASN. RNA-binding residues include Ser842 and Arg848. The Pol A motif lies at 866 to 875; it reads VGADVDSQEL. A 2'-deoxyribonucleoside 5'-triphosphate contacts are provided by Asp869, Val870, Ser872, Glu874, Arg922, Lys926, and Tyr930. The Mg(2+) site is built by Asp869 and Val870. Residues 922-937 carry the Pol B motif; sequence REHAKIFNYGRIYGAG. Thr1073 and Ser1074 together coordinate DNA. Positions 1113-1120 match the Pol C motif; sequence HDEVRYLV. An a 2'-deoxyribonucleoside 5'-triphosphate-binding site is contributed by Asp1114. Residue Asp1114 participates in Mg(2+) binding.

This sequence belongs to the DNA polymerase type-A family. Heterotrimer composed of a catalytic subunit and a homodimer of accessory subunits (POLG:POLG2). Interacts with TTC3. Interacts with LIG3. It depends on Mg(2+) as a cofactor.

The protein localises to the mitochondrion. The protein resides in the mitochondrion matrix. It localises to the mitochondrion nucleoid. It carries out the reaction DNA(n) + a 2'-deoxyribonucleoside 5'-triphosphate = DNA(n+1) + diphosphate. The enzyme catalyses a 3'-end 2'-deoxyribonucleotidyl-deoxyribonucleotide-DNA + H2O = a 3'-end 2'-deoxyribonucleotide-DNA + a 2'-deoxyribonucleoside 5'-phosphate + H(+). The catalysed reaction is a 5'-end 2'-deoxyribose-2'-deoxyribonucleotide-DNA = (2E,4S)-4-hydroxypenten-2-al-5-phosphate + a 5'-end 5'-phospho-2'-deoxyribonucleoside-DNA + H(+). With respect to regulation, inhibited by dideoxynucleotides such as antiviral agent zalcitabine. Its function is as follows. Catalytic subunit of DNA polymerase gamma solely responsible for replication of mitochondrial DNA (mtDNA). Replicates both heavy and light strands of the circular mtDNA genome using a single-stranded DNA template, RNA primers and the four deoxyribonucleoside triphosphates as substrates. Has 5' -&gt; 3' polymerase activity. Functionally interacts with TWNK and SSBP1 at the replication fork to form a highly processive replisome, where TWNK unwinds the double-stranded DNA template prior to replication and SSBP1 covers the parental heavy strand to enable continuous replication of the entire mitochondrial genome. A single nucleotide incorporation cycle includes binding of the incoming nucleotide at the insertion site, a phosphodiester bond formation reaction that extends the 3'-end of the primer DNA, and translocation of the primer terminus to the post-insertion site. After completing replication of a mtDNA strand, mediates 3' -&gt; 5' exonucleolytic degradation at the nick to enable proper ligation. Highly accurate due to high nucleotide selectivity and 3' -&gt; 5' exonucleolytic proofreading. Proficiently corrects base substitutions, single-base additions and deletions in non-repetitive sequences and short repeats, but displays lower proofreading activity when replicating longer homopolymeric stretches. Exerts exonuclease activity toward single-stranded DNA and double-stranded DNA containing 3'-terminal mispairs. When a misincorporation occurs, transitions from replication to a pro-nucleolytic editing mode and removes the missincorporated nucleoside in the exonuclease active site. Proceeds via an SN2 nucleolytic mechanism in which Asp-198 catalyzes phosphodiester bond hydrolysis and Glu-200 stabilizes the leaving group. As a result the primer strand becomes one nucleotide shorter and is positioned in the post-insertion site, ready to resume DNA synthesis. Exerts 5'-deoxyribose phosphate (dRP) lyase activity and mediates repair-associated mtDNA synthesis (gap filling) in base-excision repair pathway. Catalyzes the release of the 5'-terminal 2-deoxyribose-5-phosphate sugar moiety from incised apurinic/apyrimidinic (AP) sites to produce a substrate for DNA ligase. The dRP lyase reaction does not require divalent metal ions and likely proceeds via a Schiff base intermediate in a beta-elimination reaction mechanism. This Mus musculus (Mouse) protein is DNA polymerase subunit gamma-1.